Here is a 340-residue protein sequence, read N- to C-terminus: Uroporphyrinogen decarboxylase (340 aa).

Substrate-binding positions include 21-25 (RQAGR), Asp-71, Tyr-148, Ser-203, and His-316.

This sequence belongs to the uroporphyrinogen decarboxylase family. In terms of assembly, homodimer.

It is found in the cytoplasm. It carries out the reaction uroporphyrinogen III + 4 H(+) = coproporphyrinogen III + 4 CO2. Its pathway is porphyrin-containing compound metabolism; protoporphyrin-IX biosynthesis; coproporphyrinogen-III from 5-aminolevulinate: step 4/4. Its function is as follows. Catalyzes the decarboxylation of four acetate groups of uroporphyrinogen-III to yield coproporphyrinogen-III. The polypeptide is Uroporphyrinogen decarboxylase (Campylobacter jejuni subsp. jejuni serotype O:6 (strain 81116 / NCTC 11828)).